We begin with the raw amino-acid sequence, 314 residues long: 4-hydroxy-3-methylbut-2-enyl diphosphate reductase (314 aa).

A [4Fe-4S] cluster-binding site is contributed by Cys12. His41 and His74 together coordinate (2E)-4-hydroxy-3-methylbut-2-enyl diphosphate. His41 and His74 together coordinate dimethylallyl diphosphate. The isopentenyl diphosphate site is built by His41 and His74. Cys96 is a binding site for [4Fe-4S] cluster. A (2E)-4-hydroxy-3-methylbut-2-enyl diphosphate-binding site is contributed by His124. Position 124 (His124) interacts with dimethylallyl diphosphate. His124 provides a ligand contact to isopentenyl diphosphate. The active-site Proton donor is Glu126. Thr167 is a (2E)-4-hydroxy-3-methylbut-2-enyl diphosphate binding site. A [4Fe-4S] cluster-binding site is contributed by Cys197. (2E)-4-hydroxy-3-methylbut-2-enyl diphosphate-binding residues include Ser225, Ser226, Asn227, and Ser269. Ser225, Ser226, Asn227, and Ser269 together coordinate dimethylallyl diphosphate. 4 residues coordinate isopentenyl diphosphate: Ser225, Ser226, Asn227, and Ser269.

Belongs to the IspH family. [4Fe-4S] cluster serves as cofactor.

It catalyses the reaction isopentenyl diphosphate + 2 oxidized [2Fe-2S]-[ferredoxin] + H2O = (2E)-4-hydroxy-3-methylbut-2-enyl diphosphate + 2 reduced [2Fe-2S]-[ferredoxin] + 2 H(+). It carries out the reaction dimethylallyl diphosphate + 2 oxidized [2Fe-2S]-[ferredoxin] + H2O = (2E)-4-hydroxy-3-methylbut-2-enyl diphosphate + 2 reduced [2Fe-2S]-[ferredoxin] + 2 H(+). It functions in the pathway isoprenoid biosynthesis; dimethylallyl diphosphate biosynthesis; dimethylallyl diphosphate from (2E)-4-hydroxy-3-methylbutenyl diphosphate: step 1/1. The protein operates within isoprenoid biosynthesis; isopentenyl diphosphate biosynthesis via DXP pathway; isopentenyl diphosphate from 1-deoxy-D-xylulose 5-phosphate: step 6/6. Functionally, catalyzes the conversion of 1-hydroxy-2-methyl-2-(E)-butenyl 4-diphosphate (HMBPP) into a mixture of isopentenyl diphosphate (IPP) and dimethylallyl diphosphate (DMAPP). Acts in the terminal step of the DOXP/MEP pathway for isoprenoid precursor biosynthesis. The protein is 4-hydroxy-3-methylbut-2-enyl diphosphate reductase of Aliivibrio salmonicida (strain LFI1238) (Vibrio salmonicida (strain LFI1238)).